Reading from the N-terminus, the 182-residue chain is Ribosome maturation factor RimM (182 aa).

The PRC barrel domain maps to 103-182 (EGDYYWKDLM…SIEVDWDPGF (80 aa)).

This sequence belongs to the RimM family. As to quaternary structure, binds ribosomal protein uS19.

It is found in the cytoplasm. Its function is as follows. An accessory protein needed during the final step in the assembly of 30S ribosomal subunit, possibly for assembly of the head region. Essential for efficient processing of 16S rRNA. May be needed both before and after RbfA during the maturation of 16S rRNA. It has affinity for free ribosomal 30S subunits but not for 70S ribosomes. The chain is Ribosome maturation factor RimM from Escherichia coli O139:H28 (strain E24377A / ETEC).